The primary structure comprises 144 residues: AP-4 complex subunit sigma-1 (144 aa).

The protein belongs to the adaptor complexes small subunit family. In terms of assembly, adaptor protein complex 4 (AP-4) is a heterotetramer composed of two large adaptins (epsilon-type subunit AP4E1 and beta-type subunit AP4B1), a medium adaptin (mu-type subunit AP4M1) and a small adaptin (sigma-type AP4S1). Widely expressed.

It is found in the golgi apparatus. The protein resides in the trans-Golgi network membrane. Component of the adaptor protein complex 4 (AP-4). Adaptor protein complexes are vesicle coat components involved both in vesicle formation and cargo selection. They control the vesicular transport of proteins in different trafficking pathways. AP-4 forms a non clathrin-associated coat on vesicles departing the trans-Golgi network (TGN) and may be involved in the targeting of proteins from the trans-Golgi network (TGN) to the endosomal-lysosomal system. It is also involved in protein sorting to the basolateral membrane in epithelial cells and the proper asymmetric localization of somatodendritic proteins in neurons. AP-4 is involved in the recognition and binding of tyrosine-based sorting signals found in the cytoplasmic part of cargos, but may also recognize other types of sorting signal. This Homo sapiens (Human) protein is AP-4 complex subunit sigma-1.